The primary structure comprises 688 residues: Homoaconitase, mitochondrial (688 aa).

The transit peptide at Met-1–Cys-19 directs the protein to the mitochondrion. Residues Cys-346, Cys-406, and Cys-409 each contribute to the [4Fe-4S] cluster site.

This sequence belongs to the aconitase/IPM isomerase family. [4Fe-4S] cluster serves as cofactor.

It localises to the mitochondrion. The enzyme catalyses (2R,3S)-homoisocitrate = cis-homoaconitate + H2O. It participates in amino-acid biosynthesis; L-lysine biosynthesis via AAA pathway; L-alpha-aminoadipate from 2-oxoglutarate: step 3/5. In terms of biological role, catalyzes the reversible hydration of cis-homoaconitate to (2R,3S)-homoisocitrate, a step in the alpha-aminoadipate pathway for lysine biosynthesis. In Debaryomyces hansenii (strain ATCC 36239 / CBS 767 / BCRC 21394 / JCM 1990 / NBRC 0083 / IGC 2968) (Yeast), this protein is Homoaconitase, mitochondrial (LYS4).